Reading from the N-terminus, the 446-residue chain is tRNA-2-methylthio-N(6)-dimethylallyladenosine synthase (446 aa).

The 117-residue stretch at 5–121 (RRFYIQTFGC…LPSLIDDAAS (117 aa)) folds into the MTTase N-terminal domain. [4Fe-4S] cluster contacts are provided by C14, C50, C84, C157, C161, and C164. Positions 143 to 373 (REGRISAFIP…IDLQQEISAE (231 aa)) constitute a Radical SAM core domain. In terms of domain architecture, TRAM spans 376–439 (RRQVGTVAEV…SATLSGSREG (64 aa)).

It belongs to the methylthiotransferase family. MiaB subfamily. As to quaternary structure, monomer. [4Fe-4S] cluster serves as cofactor.

It localises to the cytoplasm. It carries out the reaction N(6)-dimethylallyladenosine(37) in tRNA + (sulfur carrier)-SH + AH2 + 2 S-adenosyl-L-methionine = 2-methylsulfanyl-N(6)-dimethylallyladenosine(37) in tRNA + (sulfur carrier)-H + 5'-deoxyadenosine + L-methionine + A + S-adenosyl-L-homocysteine + 2 H(+). Its function is as follows. Catalyzes the methylthiolation of N6-(dimethylallyl)adenosine (i(6)A), leading to the formation of 2-methylthio-N6-(dimethylallyl)adenosine (ms(2)i(6)A) at position 37 in tRNAs that read codons beginning with uridine. The protein is tRNA-2-methylthio-N(6)-dimethylallyladenosine synthase of Chlorobium luteolum (strain DSM 273 / BCRC 81028 / 2530) (Pelodictyon luteolum).